A 398-amino-acid chain; its full sequence is Putative isocitrate lyase subunit B (398 aa).

This sequence belongs to the isocitrate lyase/PEP mutase superfamily. Isocitrate lyase family. Mg(2+) is required as a cofactor.

It catalyses the reaction D-threo-isocitrate = glyoxylate + succinate. Its function is as follows. Together with AceAa, they could catalyze the formation of succinate and glyoxylate from isocitrate. The sequence is that of Putative isocitrate lyase subunit B (aceAb) from Mycobacterium tuberculosis (strain ATCC 25618 / H37Rv).